Reading from the N-terminus, the 220-residue chain is UPF0502 protein PSPPH_2577 (220 aa).

This sequence belongs to the UPF0502 family.

The chain is UPF0502 protein PSPPH_2577 from Pseudomonas savastanoi pv. phaseolicola (strain 1448A / Race 6) (Pseudomonas syringae pv. phaseolicola (strain 1448A / Race 6)).